The primary structure comprises 247 residues: Dynein axonemal assembly factor 19 (247 aa).

The stretch at 12–32 (LEKELHSALQADRKYQRENDA) forms a coiled coil.

The protein belongs to the DNAAF19/PR46b family. In terms of assembly, homodimer. As to expression, expressed in all cells bearing motile cilia.

It localises to the cytoplasm. Its subcellular location is the cell projection. It is found in the cilium. The protein resides in the flagellum. Dynein-attachment factor required for cilia motility. The polypeptide is Dynein axonemal assembly factor 19 (dnaaf19) (Danio rerio (Zebrafish)).